The following is a 259-amino-acid chain: Uridylate kinase (259 aa).

Residue 10–13 (KLSG) coordinates ATP. UMP is bound at residue Gly-52. Positions 53 and 57 each coordinate ATP. Residues Asp-72 and 134–141 (NGQPFLTT) each bind UMP. The ATP site is built by Tyr-168 and Asp-171. A disordered region spans residues 236–259 (ISSSPEKSEEFGNEVLASPAESTA).

This sequence belongs to the UMP kinase family. In terms of assembly, homohexamer.

The protein resides in the cytoplasm. It catalyses the reaction UMP + ATP = UDP + ADP. Its pathway is pyrimidine metabolism; CTP biosynthesis via de novo pathway; UDP from UMP (UMPK route): step 1/1. Its activity is regulated as follows. Inhibited by UTP. In terms of biological role, catalyzes the reversible phosphorylation of UMP to UDP. This chain is Uridylate kinase, found in Frankia casuarinae (strain DSM 45818 / CECT 9043 / HFP020203 / CcI3).